The chain runs to 193 residues: p53 apoptosis effector related to PMP-22 (193 aa).

The next 4 membrane-spanning stretches (helical) occupy residues arginine 12 to glycine 32, alanine 79 to leucine 99, valine 110 to proline 130, and tryptophan 151 to cysteine 171.

It belongs to the TMEM47 family. In terms of assembly, (Microbial infection) Interacts with S.typhimurium sipA and sctB1/sipC. As to expression, expressed in skin, heart, placental, liver, pancreas, keratinocytes and dermal fibroblasts. May translocate to the intestinal apical epithelial cell surface via sipA and sctB1/sipC-promoted exocytic translocation following infection by S. Typhimurium.

The protein localises to the cell junction. Its subcellular location is the desmosome. The protein resides in the cell membrane. It is found in the cytoplasm. Functionally, component of intercellular desmosome junctions. Plays a role in stratified epithelial integrity and cell-cell adhesion by promoting desmosome assembly. Thereby plays a role in barrier function of the skin against infection. Plays a role in mammary epithelial tissue homeostasis and remodeling during and after pregnancy, potentially via its involvement in desmosome cell-cell junctions. Required for tooth enamel development via facilitating desmosome-mediated ameloblast adhesion to the stratum intermedium during the transitional stage of amelogenesis. May also play a role in downstream transcriptional regulation of other genes involved in amelogenesis such as AMBN, ENAM, MMP20 and KLK4. Plays a role as an effector in the TP53-dependent apoptotic pathway. Positively regulates apoptosis in T-helper 17 (Th17) cell populations via caspase-dependent signaling. Promotes neutrophil transepithelial migration in response to chemoattractants such as hepoxilin A3 (HXA3), N-Formylmethionyl-leucyl-phenylalanine (fMLP) and CXCL8/IL-8. Required for neutrophil transepithelial migration in response to S.typhimurium infection. May act as a positive regulator of endothelial cell apoptosis in response to blood flow-derived shear stress. The polypeptide is p53 apoptosis effector related to PMP-22 (Homo sapiens (Human)).